A 791-amino-acid polypeptide reads, in one-letter code: KN motif and ankyrin repeat domain-containing protein 3 (791 aa).

Disordered stretches follow at residues 1–37, 56–181, 254–312, 401–425, and 463–514; these read MAKF…SVET, RGPA…GPAQ, ATSD…ETRE, GCTE…GDEM, and YESS…GDCE. Residues 25–34 show a composition bias toward polar residues; sequence SARSPSSPYS. The span at 105–125 shows a compositional bias: low complexity; that stretch reads LSPGAFPGLSLPPLSPRSLSR. Basic and acidic residues predominate over residues 127-149; that stretch reads PRVEHTLLETSRRLEQAQARERA. A phosphoserine mark is found at S151, S159, S163, S166, S167, and S176. Low complexity predominate over residues 158 to 180; the sequence is RSPRGSGRSSPAPNPALASPGPA. Positions 180-229 form a coiled coil; that stretch reads AQLQLVREQMAAALRRLRELEDQARALPELQEQVRALRAEKARLLAGRVQ. Basic and acidic residues-rich tracts occupy residues 254–280 and 293–312; these read ATSD…RRSE and PDGE…ETRE. S279 is modified (phosphoserine). The span at 401–410 shows a compositional bias: polar residues; sequence GCTEKTTQTE. The segment covering 485–496 has biased composition (low complexity); the sequence is SSSSGSDDSSGG. Residues 505 to 514 show a composition bias toward basic and acidic residues; that stretch reads HNDKDAGDCE. 5 ANK repeats span residues 606-636, 640-677, 679-708, 712-742, and 746-775; these read NGNT…DVNH, AGYS…AKAS, TGQT…DVNV, DGAT…DLTI, and EGTS…SNHQ. Positions 772 to 783 are enriched in polar residues; the sequence is SNHQGQSSTGSP. The segment at 772–791 is disordered; the sequence is SNHQGQSSTGSPTAKECNDK.

Functionally, may be involved in the control of cytoskeleton formation by regulating actin polymerization. The chain is KN motif and ankyrin repeat domain-containing protein 3 from Mus musculus (Mouse).